Consider the following 389-residue polypeptide: PqqA peptide cyclase (389 aa).

One can recognise a Radical SAM core domain in the interval V19 to E235. Residues C33, C37, and C40 each coordinate [4Fe-4S] cluster.

It belongs to the radical SAM superfamily. PqqE family. As to quaternary structure, interacts with PqqD. The interaction is necessary for activity of PqqE. The cofactor is [4Fe-4S] cluster.

The enzyme catalyses [PQQ precursor protein] + S-adenosyl-L-methionine = E-Y cross-linked-[PQQ precursor protein] + 5'-deoxyadenosine + L-methionine + H(+). It functions in the pathway cofactor biosynthesis; pyrroloquinoline quinone biosynthesis. In terms of biological role, catalyzes the cross-linking of a glutamate residue and a tyrosine residue in the PqqA protein as part of the biosynthesis of pyrroloquinoline quinone (PQQ). This Pseudomonas savastanoi pv. phaseolicola (strain 1448A / Race 6) (Pseudomonas syringae pv. phaseolicola (strain 1448A / Race 6)) protein is PqqA peptide cyclase.